We begin with the raw amino-acid sequence, 240 residues long: Tetrahydromethanopterin S-methyltransferase subunit A (240 aa).

Over Met-1–Lys-218 the chain is Cytoplasmic. His-85 contacts 5-hydroxybenzimidazolylcob(I)amide. A helical transmembrane segment spans residues Ile-219–Gly-239. Residue Arg-240 is a topological domain, extracellular.

It belongs to the MtrA family. In terms of assembly, the complex is composed of 8 subunits; MtrA, MtrB, MtrC, MtrD, MtrE, MtrF, MtrG and MtrH. It depends on 5-hydroxybenzimidazolylcob(I)amide as a cofactor.

The protein localises to the cell membrane. The catalysed reaction is 5-methyl-5,6,7,8-tetrahydromethanopterin + coenzyme M + 2 Na(+)(in) = 5,6,7,8-tetrahydromethanopterin + methyl-coenzyme M + 2 Na(+)(out). The protein operates within one-carbon metabolism; methanogenesis from CO(2); methyl-coenzyme M from 5,10-methylene-5,6,7,8-tetrahydromethanopterin: step 2/2. Its function is as follows. Part of a complex that catalyzes the formation of methyl-coenzyme M and tetrahydromethanopterin from coenzyme M and methyl-tetrahydromethanopterin. This is an energy-conserving, sodium-ion translocating step. This is Tetrahydromethanopterin S-methyltransferase subunit A from Methanosarcina acetivorans (strain ATCC 35395 / DSM 2834 / JCM 12185 / C2A).